The chain runs to 270 residues: Phosphatidylglycerol--prolipoprotein diacylglyceryl transferase (270 aa).

Transmembrane regions (helical) follow at residues 10 to 30, 56 to 76, 92 to 112, 120 to 140, 175 to 195, 202 to 222, and 237 to 257; these read VAVA…LVGI, LIFW…VLFY, WKGG…AWWF, FFQL…AGRI, SQLY…NLYA, MAVS…VEFV, and VTMG…LIWL. R139 provides a ligand contact to a 1,2-diacyl-sn-glycero-3-phospho-(1'-sn-glycerol).

Belongs to the Lgt family.

The protein localises to the cell inner membrane. The catalysed reaction is L-cysteinyl-[prolipoprotein] + a 1,2-diacyl-sn-glycero-3-phospho-(1'-sn-glycerol) = an S-1,2-diacyl-sn-glyceryl-L-cysteinyl-[prolipoprotein] + sn-glycerol 1-phosphate + H(+). The protein operates within protein modification; lipoprotein biosynthesis (diacylglyceryl transfer). In terms of biological role, catalyzes the transfer of the diacylglyceryl group from phosphatidylglycerol to the sulfhydryl group of the N-terminal cysteine of a prolipoprotein, the first step in the formation of mature lipoproteins. In Pseudomonas savastanoi pv. phaseolicola (strain 1448A / Race 6) (Pseudomonas syringae pv. phaseolicola (strain 1448A / Race 6)), this protein is Phosphatidylglycerol--prolipoprotein diacylglyceryl transferase.